The following is an 86-amino-acid chain: Small ribosomal subunit protein bS20 (86 aa).

The protein belongs to the bacterial ribosomal protein bS20 family.

Binds directly to 16S ribosomal RNA. The sequence is that of Small ribosomal subunit protein bS20 from Arthrobacter sp. (strain FB24).